The primary structure comprises 872 residues: Exoglucanase A (872 aa).

A signal peptide spans 1–40; it reads MSTLGKRAGVRRRVRAVATAATATALVAVPLTTLATSASA. The segment at 41–477 is catalytic; sequence APVHVDNPYA…PVIGGTTPVE (437 aa). 2 cysteine pairs are disulfide-bonded: Cys140–Cys202 and Cys374–Cys428. Asp188 acts as the Proton donor in catalysis. Residue Asp410 is the Nucleophile of the active site. Fibronectin type-III domains are found at residues 484-569, 579-667, and 677-765; these read VPTG…TQSG, VPAG…TQTG, and VPTG…TQAA. Residues 763–872 enclose the CBM2 domain; sequence QAATSGGCTV…TLNGVACTLG (110 aa). Cys770 and Cys869 are oxidised to a cystine.

This sequence belongs to the glycosyl hydrolase 6 (cellulase B) family.

The enzyme catalyses Hydrolysis of (1-&gt;4)-beta-D-glucosidic linkages in cellulose and cellotetraose, releasing cellobiose from the non-reducing ends of the chains.. Functionally, this enzyme hydrolyzes 1,4-beta-D-glucosidic linkages of cellulose. Weak activity against carboxymethylcellulose, bacterial microcrystalline cellulose and barley beta-glucan. Also has weak endoglucanase activity. Hydrolyzes glucosidic bonds with inversion of anomeric configuration. This chain is Exoglucanase A (cbhA), found in Cellulomonas fimi (strain ATCC 484 / DSM 20113 / JCM 1341 / CCUG 24087 / LMG 16345 / NBRC 15513 / NCIMB 8980 / NCTC 7547 / NRS-133).